The sequence spans 308 residues: MKVIFAGTPDFAAAALKAVAAAGFEIPLVLTQPDRPKGRGMQLTAPPVKQAALELGLRVAQPEKLRNNAEALQMLKEVEADVMVVAAYGLILPQDVLDTPKHGCLNIHASLLPRWRGAAPIQRAIEAGDAETGVCIMQMDIGLDTGDVVSEHRYAIQPTDTANEVHDALMEIGAAAVVADLQQLQSKGRLNAVKQPEEGVTYAQKLSKEEARIDWSESADIIERKIRAFNPVPAAWVEYQGKPMKIRRAEVVAQQGTAGEVLSCSADGLVVACGESALKITELQPAGGRRMNIAAFAAGRSIEAGAKL.

110–113 (SLLP) serves as a coordination point for (6S)-5,6,7,8-tetrahydrofolate.

Belongs to the Fmt family.

It carries out the reaction L-methionyl-tRNA(fMet) + (6R)-10-formyltetrahydrofolate = N-formyl-L-methionyl-tRNA(fMet) + (6S)-5,6,7,8-tetrahydrofolate + H(+). In terms of biological role, attaches a formyl group to the free amino group of methionyl-tRNA(fMet). The formyl group appears to play a dual role in the initiator identity of N-formylmethionyl-tRNA by promoting its recognition by IF2 and preventing the misappropriation of this tRNA by the elongation apparatus. In Neisseria gonorrhoeae (strain NCCP11945), this protein is Methionyl-tRNA formyltransferase.